The following is a 426-amino-acid chain: Histidine--tRNA ligase (426 aa).

The protein belongs to the class-II aminoacyl-tRNA synthetase family. In terms of assembly, homodimer.

The protein resides in the cytoplasm. The catalysed reaction is tRNA(His) + L-histidine + ATP = L-histidyl-tRNA(His) + AMP + diphosphate + H(+). The polypeptide is Histidine--tRNA ligase (Malacoplasma penetrans (strain HF-2) (Mycoplasma penetrans)).